The chain runs to 31 residues: Cyclotide glopa C (31 aa).

The segment at residues 1 to 31 (GDLPICGETCFEGGNCRIPGCTCVWPFCSKN) is a cross-link (cyclopeptide (Gly-Asn)). 3 cysteine pairs are disulfide-bonded: cysteine 6–cysteine 21, cysteine 10–cysteine 23, and cysteine 16–cysteine 28.

Post-translationally, this is a cyclic peptide.

In terms of biological role, probably participates in a plant defense mechanism. The protein is Cyclotide glopa C of Gloeospermum pauciflorum.